The chain runs to 483 residues: Linamarin synthase 1 (483 aa).

His-22 acts as the Proton acceptor in catalysis. Position 22 (His-22) interacts with an anthocyanidin. Asp-124 serves as the catalytic Charge relay. Residues Thr-146, Val-360, Gln-362, His-377, Trp-380, Asn-381, Ser-382, and Glu-385 each contribute to the UDP-alpha-D-glucose site. Ala-400 contacts an anthocyanidin. 2 residues coordinate UDP-alpha-D-glucose: Glu-401 and Gln-402.

The protein belongs to the UDP-glycosyltransferase family. In terms of tissue distribution, expressed in the cortex, xylem and phloem parenchyma, and in specific cells in the endodermis of the petiole of the first unfolded leaf.

It carries out the reaction 2-hydroxy-2-methylpropanenitrile + UDP-alpha-D-glucose = linamarin + UDP + H(+). Functionally, UDP-glucosyltransferase catalyzing in planta synthesis of cyanogenic glucosides. Able to glucosylate acetone cyanohydrin and 2-hydroxy-2-methylbutyronitrile, forming linamarin and lotaustralin. Also accepts, to some extent, a wide range of potential acceptor substrates, including simple alcohols, flavonoids, isoflavonoids and other hydroxynitriles such as p-hydroxymandelonitrile, mandelonitrile, (E)-4-hydroxy-2-methylbut-2-enenitrile and (E)- 2-(hydroxymethyl)but-2-enenitrile. The polypeptide is Linamarin synthase 1 (Manihot esculenta (Cassava)).